Consider the following 307-residue polypeptide: UDP-3-O-acyl-N-acetylglucosamine deacetylase (307 aa).

H78, H241, and D245 together coordinate Zn(2+). The active-site Proton donor is H268.

Belongs to the LpxC family. It depends on Zn(2+) as a cofactor.

The catalysed reaction is a UDP-3-O-[(3R)-3-hydroxyacyl]-N-acetyl-alpha-D-glucosamine + H2O = a UDP-3-O-[(3R)-3-hydroxyacyl]-alpha-D-glucosamine + acetate. Its pathway is glycolipid biosynthesis; lipid IV(A) biosynthesis; lipid IV(A) from (3R)-3-hydroxytetradecanoyl-[acyl-carrier-protein] and UDP-N-acetyl-alpha-D-glucosamine: step 2/6. Catalyzes the hydrolysis of UDP-3-O-myristoyl-N-acetylglucosamine to form UDP-3-O-myristoylglucosamine and acetate, the committed step in lipid A biosynthesis. The polypeptide is UDP-3-O-acyl-N-acetylglucosamine deacetylase (Paracidovorax citrulli (strain AAC00-1) (Acidovorax citrulli)).